A 571-amino-acid polypeptide reads, in one-letter code: DDB1- and CUL4-associated factor 11 homolog (571 aa).

The interval Arg51–Thr75 is disordered. Positions Ser60 to Glu69 are enriched in acidic residues. 6 WD repeats span residues Arg162–Arg201, Arg266–Thr305, Ala309–Val349, Gly357–Gly396, Gly435–Arg479, and Gly482–Ile521.

The protein belongs to the WD repeat LEC14B family.

Its function is as follows. Involved in regulation of lifespan. Required for dopaminergic CEP neuron degeneration in response to Mn(2+). Inhibits the skn-1-mediated up-regulation of tatn-1. This is DDB1- and CUL4-associated factor 11 homolog from Caenorhabditis elegans.